We begin with the raw amino-acid sequence, 910 residues long: Chitin synthase A (910 aa).

A disordered region spans residues Asn56–Pro156. Basic and acidic residues-rich tracts occupy residues Tyr57 to Ala84 and Asp130 to Pro148. 9 helical membrane passes run Trp366–Gly386, Ser448–Leu468, Val583–Phe603, Val620–Ser640, Met655–Val675, Thr701–Leu721, Phe730–Cys750, Gly828–Gly848, and Leu876–Val896.

This sequence belongs to the chitin synthase family. Class I subfamily.

Its subcellular location is the cell membrane. The enzyme catalyses [(1-&gt;4)-N-acetyl-beta-D-glucosaminyl](n) + UDP-N-acetyl-alpha-D-glucosamine = [(1-&gt;4)-N-acetyl-beta-D-glucosaminyl](n+1) + UDP + H(+). In terms of biological role, polymerizes chitin, a structural polymer of the cell wall and septum, by transferring the sugar moiety of UDP-GlcNAc to the non-reducing end of the growing chitin polymer. In Ampelomyces quisqualis (Powdery mildew agent), this protein is Chitin synthase A (CHSA).